Here is a 408-residue protein sequence, read N- to C-terminus: GTPase Obg (408 aa).

One can recognise an Obg domain in the interval 1–159; the sequence is MKFVDEVSIR…RDLKMEMKVL (159 aa). Residues 127–150 are disordered; the sequence is NTRFKSSTNRAPRQTTPGKPGDQR. Polar residues predominate over residues 129–143; that stretch reads RFKSSTNRAPRQTTP. Residues 160-333 enclose the OBG-type G domain; the sequence is ADVGLLGLPN…LSHDLMRYLE (174 aa). Residues 166 to 173, 191 to 195, 213 to 216, 283 to 286, and 314 to 316 each bind GTP; these read GLPNAGKS, FTTLV, DIPG, NKSD, and SAI. Mg(2+)-binding residues include Ser-173 and Thr-193. The interval 382–408 is disordered; the sequence is HDIGDDDGWDDDFEDDEDGPEIIYVRD. Residues 385–401 show a composition bias toward acidic residues; the sequence is GDDDGWDDDFEDDEDGP.

This sequence belongs to the TRAFAC class OBG-HflX-like GTPase superfamily. OBG GTPase family. Monomer. Mg(2+) is required as a cofactor.

It is found in the cytoplasm. An essential GTPase which binds GTP, GDP and possibly (p)ppGpp with moderate affinity, with high nucleotide exchange rates and a fairly low GTP hydrolysis rate. Plays a role in control of the cell cycle, stress response, ribosome biogenesis and in those bacteria that undergo differentiation, in morphogenesis control. This is GTPase Obg from Pseudomonas putida (strain GB-1).